Consider the following 93-residue polypeptide: Small ribosomal subunit protein uS19 (93 aa).

This sequence belongs to the universal ribosomal protein uS19 family.

Functionally, protein S19 forms a complex with S13 that binds strongly to the 16S ribosomal RNA. This chain is Small ribosomal subunit protein uS19, found in Leptospira interrogans serogroup Icterohaemorrhagiae serovar copenhageni (strain Fiocruz L1-130).